The following is a 265-amino-acid chain: Orphan methyltransferase M.BamHII (265 aa).

It belongs to the N(4)/N(6)-methyltransferase family. N(4) subfamily.

It carries out the reaction a 2'-deoxycytidine in DNA + S-adenosyl-L-methionine = an N(4)-methyl-2'-deoxycytidine in DNA + S-adenosyl-L-homocysteine + H(+). Its function is as follows. A beta subtype methylase, recognizes the double-stranded sequence 5'-GGATCC-3', methylates C-? on both strands. No endonuclease has been identified for this methylase, although it is speculated it might protect against BamHI. The chain is Orphan methyltransferase M.BamHII (bamHIIM) from Bacillus amyloliquefaciens (Bacillus velezensis).